A 439-amino-acid polypeptide reads, in one-letter code: Xylose isomerase (439 aa).

Active-site residues include H101 and D104. Residues E232, E268, H271, D296, D307, D309, and D339 each contribute to the Mg(2+) site.

Belongs to the xylose isomerase family. As to quaternary structure, homotetramer. Requires Mg(2+) as cofactor.

It is found in the cytoplasm. It catalyses the reaction alpha-D-xylose = alpha-D-xylulofuranose. This chain is Xylose isomerase, found in Yersinia enterocolitica serotype O:8 / biotype 1B (strain NCTC 13174 / 8081).